The sequence spans 432 residues: Trigger factor (432 aa).

The 86-residue stretch at 161 to 246 folds into the PPIase FKBP-type domain; it reads EDRVTIDFTG…LKKVEERGLP (86 aa).

Belongs to the FKBP-type PPIase family. Tig subfamily.

Its subcellular location is the cytoplasm. It carries out the reaction [protein]-peptidylproline (omega=180) = [protein]-peptidylproline (omega=0). Its function is as follows. Involved in protein export. Acts as a chaperone by maintaining the newly synthesized protein in an open conformation. Functions as a peptidyl-prolyl cis-trans isomerase. In Salmonella choleraesuis (strain SC-B67), this protein is Trigger factor.